Consider the following 213-residue polypeptide: Pyrrolidone-carboxylate peptidase (213 aa).

Catalysis depends on residues Glu78, Cys141, and His165.

This sequence belongs to the peptidase C15 family. In terms of assembly, homotetramer.

It localises to the cytoplasm. It catalyses the reaction Release of an N-terminal pyroglutamyl group from a polypeptide, the second amino acid generally not being Pro.. Removes 5-oxoproline from various penultimate amino acid residues except L-proline. The protein is Pyrrolidone-carboxylate peptidase of Staphylococcus saprophyticus subsp. saprophyticus (strain ATCC 15305 / DSM 20229 / NCIMB 8711 / NCTC 7292 / S-41).